The sequence spans 151 residues: D-aminoacyl-tRNA deacylase (151 aa).

The short motif at 136-137 is the Gly-cisPro motif, important for rejection of L-amino acids element; sequence GP.

This sequence belongs to the DTD family. As to quaternary structure, homodimer.

Its subcellular location is the cytoplasm. It catalyses the reaction glycyl-tRNA(Ala) + H2O = tRNA(Ala) + glycine + H(+). The catalysed reaction is a D-aminoacyl-tRNA + H2O = a tRNA + a D-alpha-amino acid + H(+). An aminoacyl-tRNA editing enzyme that deacylates mischarged D-aminoacyl-tRNAs. Also deacylates mischarged glycyl-tRNA(Ala), protecting cells against glycine mischarging by AlaRS. Acts via tRNA-based rather than protein-based catalysis; rejects L-amino acids rather than detecting D-amino acids in the active site. By recycling D-aminoacyl-tRNA to D-amino acids and free tRNA molecules, this enzyme counteracts the toxicity associated with the formation of D-aminoacyl-tRNA entities in vivo and helps enforce protein L-homochirality. The polypeptide is D-aminoacyl-tRNA deacylase (Lactococcus lactis subsp. cremoris (strain MG1363)).